Reading from the N-terminus, the 644-residue chain is Exoribonuclease 2 (644 aa).

One can recognise an RNB domain in the interval 189–516 (REDLTALDFV…NHRLLKAVIK (328 aa)). Residues 561-643 (DTRFAAEIVD…ETRSIIARPV (83 aa)) form the S1 motif domain.

This sequence belongs to the RNR ribonuclease family. RNase II subfamily.

The protein localises to the cytoplasm. It catalyses the reaction Exonucleolytic cleavage in the 3'- to 5'-direction to yield nucleoside 5'-phosphates.. Its function is as follows. Involved in mRNA degradation. Hydrolyzes single-stranded polyribonucleotides processively in the 3' to 5' direction. This chain is Exoribonuclease 2, found in Escherichia coli O17:K52:H18 (strain UMN026 / ExPEC).